The sequence spans 256 residues: Deoxyribose-phosphate aldolase (256 aa).

D102 acts as the Proton donor/acceptor in catalysis. The active-site Schiff-base intermediate with acetaldehyde is K165. Residue K197 is the Proton donor/acceptor of the active site.

Belongs to the DeoC/FbaB aldolase family. DeoC type 2 subfamily.

The protein resides in the cytoplasm. It carries out the reaction 2-deoxy-D-ribose 5-phosphate = D-glyceraldehyde 3-phosphate + acetaldehyde. It participates in carbohydrate degradation; 2-deoxy-D-ribose 1-phosphate degradation; D-glyceraldehyde 3-phosphate and acetaldehyde from 2-deoxy-alpha-D-ribose 1-phosphate: step 2/2. Its function is as follows. Catalyzes a reversible aldol reaction between acetaldehyde and D-glyceraldehyde 3-phosphate to generate 2-deoxy-D-ribose 5-phosphate. The polypeptide is Deoxyribose-phosphate aldolase (Shewanella baltica (strain OS155 / ATCC BAA-1091)).